The chain runs to 129 residues: uncharacterized protein (129 aa).

A compositionally biased stretch (low complexity) spans Ser85–Asp108. The interval Ser85–Pro110 is disordered.

This is an uncharacterized protein from Microplitis demolitor (Parasitoid wasp).